Reading from the N-terminus, the 121-residue chain is Small ribosomal subunit protein uS13 (121 aa).

A disordered region spans residues 91 to 121 (HKRGLPVRGQRTRTNARTRKGPRRAAASLKK).

This sequence belongs to the universal ribosomal protein uS13 family. Part of the 30S ribosomal subunit. Forms a loose heterodimer with protein S19. Forms two bridges to the 50S subunit in the 70S ribosome.

Its function is as follows. Located at the top of the head of the 30S subunit, it contacts several helices of the 16S rRNA. In the 70S ribosome it contacts the 23S rRNA (bridge B1a) and protein L5 of the 50S subunit (bridge B1b), connecting the 2 subunits; these bridges are implicated in subunit movement. Contacts the tRNAs in the A and P-sites. This Bordetella petrii (strain ATCC BAA-461 / DSM 12804 / CCUG 43448) protein is Small ribosomal subunit protein uS13.